The sequence spans 2493 residues: Adenylate cyclase (2493 aa).

Polar residues-rich tracts occupy residues 1–18, 42–51, 60–78, 129–147, and 197–210; these read MLFTMQFTTRSTVASPEQ, RDSNGSSNFT, SQQYDDTSTNSFHSSQPDI, PANSHSDSLPGPSTHSISP, and APFSSSHSNRTSVN. Disordered regions lie at residues 1–85, 99–148, 197–325, 355–444, 475–565, 616–660, 753–832, 854–882, and 904–967; these read MLFT…SSTL, FEHA…ISPS, APFS…SSLS, NSPS…QSQS, GSIT…VNML, QAPV…KTSY, NVGE…GSKS, ALVQQQSQSQNHHQPSPNVRPTSRGGAGA, and RPSK…ATGT. Over residues 211 to 233 the composition is skewed to low complexity; that stretch reads PSAASTASPSTSAATRTRPRGGT. Polar residues-rich tracts occupy residues 234–246 and 253–264; these read NASQYNTLDTSFG and LSSSRSQYSLRP. Basic residues-rich tracts occupy residues 287–303 and 404–422; these read AVKKTRNPFGFLKKKSS and HLKKDPRKRIKGVRHHLAK. Residues 425–434 show a composition bias toward basic and acidic residues; that stretch reads KPGEDADSAR. A compositionally biased stretch (polar residues) spans 500–525; that stretch reads PSPSQTPIAERQTSVTSTVESPSHAS. Positions 534 to 555 are enriched in low complexity; that stretch reads SLRTPSRTTASTSTSSASTVLS. Basic and acidic residues predominate over residues 630–640; the sequence is TDSELSDRKDS. Residues 641-660 show a composition bias toward polar residues; it reads VVSTHSMRSNHSGISPKTSY. Residues 754–763 show a composition bias toward acidic residues; sequence VGEEEDDDDD. Composition is skewed to low complexity over residues 780–791 and 854–870; these read SSSGISSTHASS and ALVQQQSQSQNHHQPSP. The span at 913–935 shows a compositional bias: polar residues; the sequence is RPNTAGSVGATRPSTTTLGSTLS. One can recognise a Ras-associating domain in the interval 970-1072; that stretch reads RNHFIRVYKT…LRFVFRPDSV (103 aa). LRR repeat units lie at residues 1086 to 1107, 1110 to 1132, 1134 to 1155, 1157 to 1178, 1181 to 1202, 1204 to 1225, 1227 to 1248, 1250 to 1271, 1273 to 1294, 1295 to 1316, 1317 to 1336, 1339 to 1360, 1363 to 1385, 1386 to 1407, 1409 to 1430, 1432 to 1453, 1511 to 1534, 1535 to 1556, 1559 to 1580, 1583 to 1605, 1606 to 1628, and 1635 to 1654; these read TFQHLDLHSRNLEMVPIFLYKH, WIVSLDLSGNPMSDLPLDFVQLC, SLRTLRLSNLALKRIPQSVRHS, TLTHLDVSNNRIVELAHVSLDL, ELMSLKVQNNRLFDLPSYFSSI, TLRNLNISNNRFEEFPKVICDV, SLVDLDVSFNSITELPAEIANL, NLERFILAGNELEKLPDSMSEL, SLRTIDLRRNKVQDVSSLLGLP, RLQNIQAESNNIKSFEATLGPQ, LTQVELGRNPLSKVRIAALT, DLTSLDLSSTNMTRLEEGLFPQ, ALVKLTLDGNQLVVLPDTLGDLK, RLEMLSCSNNLLATLPESIGDL, ALKELLVHNNNLKTLPQTLWLC, SLAHINLSSNLLESFPAVPDIR, SLQKLRLGDNRLGDDVFSVLSELT, SLEVLNLSFNEIFEIPDFSLQT, KLRELYISGNQLSTIPSDDLVV, ELRILHLNCNKLTTLPTELGKLK, KLANLDVGNNVLKYNIANWHYDW, and ELRYLNLSGNTRLEIKTKLS. Residues 1710–2000 form the PPM-type phosphatase domain; sequence AYGIADALGK…ESIMVMVISV (291 aa). A Guanylate cyclase domain is found at 2058-2194; sequence ALVFTDIKNS…PMVNRAARIS (137 aa). Mg(2+) is bound by residues Asp-2063 and Asp-2105. Disordered stretches follow at residues 2220-2241, 2354-2378, and 2467-2493; these read DESSTAGGAGGEGENLEKTEEE, EADRSQPSTPLDDNGRNPIDGHGTA, and PPRASTSALSLPSPRTSPRNRLLELVP. Positions 2470–2485 are enriched in polar residues; sequence ASTSALSLPSPRTSPR.

It belongs to the adenylyl cyclase class-3 family. Mg(2+) serves as cofactor.

The catalysed reaction is ATP = 3',5'-cyclic AMP + diphosphate. Its function is as follows. Plays essential roles in regulation of cellular metabolism by catalyzing the synthesis of a second messenger, cAMP. This Mycosarcoma maydis (Corn smut fungus) protein is Adenylate cyclase (UAC1).